The primary structure comprises 144 residues: D-aminoacyl-tRNA deacylase (144 aa).

The Gly-cisPro motif, important for rejection of L-amino acids motif lies at 136–137; that stretch reads GP.

The protein belongs to the DTD family. In terms of assembly, homodimer.

It localises to the cytoplasm. It carries out the reaction glycyl-tRNA(Ala) + H2O = tRNA(Ala) + glycine + H(+). The enzyme catalyses a D-aminoacyl-tRNA + H2O = a tRNA + a D-alpha-amino acid + H(+). Functionally, an aminoacyl-tRNA editing enzyme that deacylates mischarged D-aminoacyl-tRNAs. Also deacylates mischarged glycyl-tRNA(Ala), protecting cells against glycine mischarging by AlaRS. Acts via tRNA-based rather than protein-based catalysis; rejects L-amino acids rather than detecting D-amino acids in the active site. By recycling D-aminoacyl-tRNA to D-amino acids and free tRNA molecules, this enzyme counteracts the toxicity associated with the formation of D-aminoacyl-tRNA entities in vivo and helps enforce protein L-homochirality. The protein is D-aminoacyl-tRNA deacylase of Mannheimia succiniciproducens (strain KCTC 0769BP / MBEL55E).